The following is a 297-amino-acid chain: MEIGLREWLILIGIIVIAGILFDGWRRMRGGKGKLKFRLDRSYSNLPDEEGGSAEVLGPSRVLDTHKEPELDESDLPSLSASARDREREPKPVKASKRGKRVSAAADVQQGDLNLSAEQREPDLFADSDDDFAADNNRSSGAAPASSSVKELPPAEEVLVISVISRDEGGFKGPALLQNILESGLRFGEMDIFHRHESMAGHGEVLFSMANAVKPGVFDLDDIDHFSTRAVSFFLGLPGPRHPKQAFDVMVAAARKLAHELNGELKDDQRSVLTAQTIEHYRQRIVEFERRALTQKR.

Residue M1 is a topological domain, periplasmic. A helical transmembrane segment spans residues 2 to 22 (EIGLREWLILIGIIVIAGILF). Topologically, residues 23-297 (DGWRRMRGGK…FERRALTQKR (275 aa)) are cytoplasmic. The disordered stretch occupies residues 48 to 150 (DEEGGSAEVL…GAAPASSSVK (103 aa)). A compositionally biased stretch (basic and acidic residues) spans 83-92 (ARDREREPKP). The segment covering 124 to 133 (LFADSDDDFA) has biased composition (acidic residues). Positions 136–149 (NNRSSGAAPASSSV) are enriched in polar residues.

This sequence belongs to the ZipA family. In terms of assembly, interacts with FtsZ via their C-terminal domains.

The protein localises to the cell inner membrane. Functionally, essential cell division protein that stabilizes the FtsZ protofilaments by cross-linking them and that serves as a cytoplasmic membrane anchor for the Z ring. Also required for the recruitment to the septal ring of downstream cell division proteins. The chain is Cell division protein ZipA from Pseudomonas putida (strain ATCC 700007 / DSM 6899 / JCM 31910 / BCRC 17059 / LMG 24140 / F1).